Consider the following 83-residue polypeptide: Exodeoxyribonuclease 7 small subunit (83 aa).

This sequence belongs to the XseB family. Heterooligomer composed of large and small subunits.

It is found in the cytoplasm. The catalysed reaction is Exonucleolytic cleavage in either 5'- to 3'- or 3'- to 5'-direction to yield nucleoside 5'-phosphates.. In terms of biological role, bidirectionally degrades single-stranded DNA into large acid-insoluble oligonucleotides, which are then degraded further into small acid-soluble oligonucleotides. The chain is Exodeoxyribonuclease 7 small subunit from Rhizobium leguminosarum bv. trifolii (strain WSM2304).